A 187-amino-acid polypeptide reads, in one-letter code: Elongation factor P (187 aa).

It belongs to the elongation factor P family.

It is found in the cytoplasm. Its pathway is protein biosynthesis; polypeptide chain elongation. Its function is as follows. Involved in peptide bond synthesis. Stimulates efficient translation and peptide-bond synthesis on native or reconstituted 70S ribosomes in vitro. Probably functions indirectly by altering the affinity of the ribosome for aminoacyl-tRNA, thus increasing their reactivity as acceptors for peptidyl transferase. The sequence is that of Elongation factor P from Roseiflexus sp. (strain RS-1).